Reading from the N-terminus, the 204-residue chain is Photosynthetic NDH subunit of subcomplex B 3, chloroplastic (204 aa).

Disordered stretches follow at residues 1 to 24 (MGSV…FSHK) and 45 to 68 (KTVR…DEPP). The N-terminal 48 residues, 1-48 (MGSVQLSGSGLVASLPPNHSFSHKTKLNKPNSYFFRSKHNAARTKTVR), are a transit peptide targeting the chloroplast. Positions 76–180 (HSVLLPDGTP…STGLVVIQQL (105 aa)) constitute a 2Fe-2S ferredoxin-type domain. [2Fe-2S] cluster contacts are provided by cysteine 120, cysteine 126, cysteine 129, and cysteine 162.

Part of the chloroplast NDH complex, composed of a mixture of chloroplast and nucleus encoded subunits. Component of the NDH subcomplex B, at least composed of PnsB1, PnsB2, PnsB3, PnsB4 and PnsB5.

It is found in the plastid. It localises to the chloroplast thylakoid membrane. NDH shuttles electrons from NAD(P)H:plastoquinone, via FMN and iron-sulfur (Fe-S) centers, to quinones in the photosynthetic chain and possibly in a chloroplast respiratory chain. The immediate electron acceptor for the enzyme in this species is believed to be plastoquinone. Couples the redox reaction to proton translocation, and thus conserves the redox energy in a proton gradient. The polypeptide is Photosynthetic NDH subunit of subcomplex B 3, chloroplastic (Arabidopsis thaliana (Mouse-ear cress)).